A 102-amino-acid chain; its full sequence is Pole-localizer protein TmaR (102 aa).

Residues 7–34 adopt a coiled-coil conformation; sequence IINQARRKNKLKRELQDNQKKIRDNQKR.

The protein belongs to the pole-localizer TmaR family.

Its subcellular location is the cytoplasm. Functionally, pole-localizer protein involved in the regulation of several cellular processes. The sequence is that of Pole-localizer protein TmaR from Aliivibrio salmonicida (strain LFI1238) (Vibrio salmonicida (strain LFI1238)).